Here is a 379-residue protein sequence, read N- to C-terminus: Protein PatA (379 aa).

The tract at residues 181 to 226 (RREASSQEISSSTEHNQIPVNNRRSTKFTSPPHTQPKPEPRLPQIN) is disordered. Polar residues predominate over residues 186 to 212 (SQEISSSTEHNQIPVNNRRSTKFTSPP). The Response regulatory domain occupies 262-378 (TIFCIDENPI…DLLKVIFKHI (117 aa)). 4-aspartylphosphate is present on Asp-313.

Its subcellular location is the cell septum. Functionally, controls heterocyst pattern formation. Required for the differentiation of intercalary heterocysts but not for terminal heterocysts. This is Protein PatA (patA) from Nostoc sp. (strain PCC 7120 / SAG 25.82 / UTEX 2576).